We begin with the raw amino-acid sequence, 715 residues long: Polyphosphate kinase (715 aa).

Asn-60 provides a ligand contact to ATP. Positions 380 and 410 each coordinate Mg(2+). The active-site Phosphohistidine intermediate is the His-440. ATP is bound by residues Tyr-473, Arg-569, and His-597.

The protein belongs to the polyphosphate kinase 1 (PPK1) family. The cofactor is Mg(2+). In terms of processing, an intermediate of this reaction is the autophosphorylated ppk in which a phosphate is covalently linked to a histidine residue through a N-P bond.

It carries out the reaction [phosphate](n) + ATP = [phosphate](n+1) + ADP. Catalyzes the reversible transfer of the terminal phosphate of ATP to form a long-chain polyphosphate (polyP). This chain is Polyphosphate kinase, found in Erythrobacter litoralis (strain HTCC2594).